A 170-amino-acid polypeptide reads, in one-letter code: Lipoprotein signal peptidase (170 aa).

Transmembrane regions (helical) follow at residues 11–31, 41–61, 69–89, and 95–115; these read LSWL…KFYF, IVVI…AAFS, WQRW…VVWL, and NETW…GNLY. Catalysis depends on residues Asp125 and Asp144. A helical membrane pass occupies residues 136–156; it reads YFPAFNFADSAITVGAVMLAL.

The protein belongs to the peptidase A8 family.

The protein resides in the cell inner membrane. It catalyses the reaction Release of signal peptides from bacterial membrane prolipoproteins. Hydrolyzes -Xaa-Yaa-Zaa-|-(S,diacylglyceryl)Cys-, in which Xaa is hydrophobic (preferably Leu), and Yaa (Ala or Ser) and Zaa (Gly or Ala) have small, neutral side chains.. Its pathway is protein modification; lipoprotein biosynthesis (signal peptide cleavage). Its function is as follows. This protein specifically catalyzes the removal of signal peptides from prolipoproteins. This Pseudomonas fluorescens (strain Pf0-1) protein is Lipoprotein signal peptidase.